Consider the following 378-residue polypeptide: Anhydro-N-acetylmuramic acid kinase (378 aa).

23–30 (GTSMDGAD) contributes to the ATP binding site.

This sequence belongs to the anhydro-N-acetylmuramic acid kinase family.

The enzyme catalyses 1,6-anhydro-N-acetyl-beta-muramate + ATP + H2O = N-acetyl-D-muramate 6-phosphate + ADP + H(+). Its pathway is amino-sugar metabolism; 1,6-anhydro-N-acetylmuramate degradation. The protein operates within cell wall biogenesis; peptidoglycan recycling. In terms of biological role, catalyzes the specific phosphorylation of 1,6-anhydro-N-acetylmuramic acid (anhMurNAc) with the simultaneous cleavage of the 1,6-anhydro ring, generating MurNAc-6-P. Is required for the utilization of anhMurNAc either imported from the medium or derived from its own cell wall murein, and thus plays a role in cell wall recycling. The chain is Anhydro-N-acetylmuramic acid kinase from Bordetella pertussis (strain Tohama I / ATCC BAA-589 / NCTC 13251).